A 371-amino-acid chain; its full sequence is O-phospho-L-seryl-tRNA:Cys-tRNA synthase 1 (371 aa).

Residues 78–79 (AR), asparagine 183, and 206–208 (SGH) each bind pyridoxal 5'-phosphate. Residue lysine 209 is modified to N6-(pyridoxal phosphate)lysine.

It belongs to the SepCysS family. In terms of assembly, homodimer. Probably interacts with SepRS. Pyridoxal 5'-phosphate is required as a cofactor.

It carries out the reaction O-phospho-L-seryl-tRNA(Cys) + hydrogen sulfide + H(+) = L-cysteinyl-tRNA(Cys) + phosphate. Converts O-phospho-L-seryl-tRNA(Cys) (Sep-tRNA(Cys)) to L-cysteinyl-tRNA(Cys) (Cys-tRNA(Cys)). The protein is O-phospho-L-seryl-tRNA:Cys-tRNA synthase 1 of Archaeoglobus fulgidus (strain ATCC 49558 / DSM 4304 / JCM 9628 / NBRC 100126 / VC-16).